The chain runs to 225 residues: ATP synthase subunit a (225 aa).

6 consecutive transmembrane segments (helical) span residues 18 to 38 (LSLNWTSTFLGLLLIPSMFWL), 73 to 93 (ILISIFIMMLFNNFMGLFPYI), 100 to 120 (MTLTFSIALPMWMSFMLFGWI), 126 to 146 (MFTHLVPQGTPNALMSFMVLI), 156 to 176 (GTLAVRLAANMIAGHLLLTLL), and 187 to 207 (IMLFLIIGQMLLLILESAVAM).

Belongs to the ATPase A chain family. In terms of assembly, F-type ATPases have 2 components, CF(1) - the catalytic core - and CF(0) - the membrane proton channel. CF(1) has five subunits: alpha(3), beta(3), gamma(1), delta(1), epsilon(1). CF(0) has three main subunits: a, b and c.

It localises to the mitochondrion inner membrane. Its function is as follows. Mitochondrial membrane ATP synthase (F(1)F(0) ATP synthase or Complex V) produces ATP from ADP in the presence of a proton gradient across the membrane which is generated by electron transport complexes of the respiratory chain. F-type ATPases consist of two structural domains, F(1) - containing the extramembraneous catalytic core and F(0) - containing the membrane proton channel, linked together by a central stalk and a peripheral stalk. During catalysis, ATP synthesis in the catalytic domain of F(1) is coupled via a rotary mechanism of the central stalk subunits to proton translocation. Key component of the proton channel; it may play a direct role in the translocation of protons across the membrane. The polypeptide is ATP synthase subunit a (ATP6) (Locusta migratoria (Migratory locust)).